The primary structure comprises 439 residues: uncharacterized protein (439 aa).

The N-terminal stretch at Met-1–Ala-19 is a signal peptide.

This is an uncharacterized protein from Rickettsia felis (strain ATCC VR-1525 / URRWXCal2) (Rickettsia azadi).